The sequence spans 360 residues: Peptide chain release factor 1 (360 aa).

Residue glutamine 235 is modified to N5-methylglutamine. The tract at residues 285 to 314 (KRQQAEASTRRNLLGSGDRSDRNRTYNFPQ) is disordered.

It belongs to the prokaryotic/mitochondrial release factor family. Post-translationally, methylated by PrmC. Methylation increases the termination efficiency of RF1.

It localises to the cytoplasm. Its function is as follows. Peptide chain release factor 1 directs the termination of translation in response to the peptide chain termination codons UAG and UAA. This Klebsiella pneumoniae subsp. pneumoniae (strain ATCC 700721 / MGH 78578) protein is Peptide chain release factor 1.